The chain runs to 149 residues: Large ribosomal subunit protein bL17 (149 aa).

It belongs to the bacterial ribosomal protein bL17 family. In terms of assembly, part of the 50S ribosomal subunit. Contacts protein L32.

This Kosmotoga olearia (strain ATCC BAA-1733 / DSM 21960 / TBF 19.5.1) protein is Large ribosomal subunit protein bL17.